The chain runs to 297 residues: Protease HtpX homolog (297 aa).

2 helical membrane-spanning segments follow: residues Val-14–Leu-34 and Tyr-39–Phe-59. His-143 provides a ligand contact to Zn(2+). Glu-144 is an active-site residue. His-147 lines the Zn(2+) pocket. Transmembrane regions (helical) follow at residues Ile-158 to Trp-178 and Gly-193 to Ala-213. Glu-225 contributes to the Zn(2+) binding site.

It belongs to the peptidase M48B family. It depends on Zn(2+) as a cofactor.

The protein localises to the cell membrane. This chain is Protease HtpX homolog, found in Streptococcus equi subsp. equi (strain 4047).